Here is a 133-residue protein sequence, read N- to C-terminus: Small ribosomal subunit protein uS8 (133 aa).

Belongs to the universal ribosomal protein uS8 family. In terms of assembly, part of the 30S ribosomal subunit. Contacts proteins S5 and S12.

In terms of biological role, one of the primary rRNA binding proteins, it binds directly to 16S rRNA central domain where it helps coordinate assembly of the platform of the 30S subunit. This is Small ribosomal subunit protein uS8 from Acaryochloris marina (strain MBIC 11017).